A 138-amino-acid polypeptide reads, in one-letter code: Large ribosomal subunit protein uL16 (138 aa).

Basic residues predominate over residues 1–19; the sequence is MLIPRKVKHRKQHHPKKKG. The segment at 1 to 24 is disordered; it reads MLIPRKVKHRKQHHPKKKGTASGG.

Belongs to the universal ribosomal protein uL16 family. In terms of assembly, part of the 50S ribosomal subunit.

Its function is as follows. Binds 23S rRNA and is also seen to make contacts with the A and possibly P site tRNAs. This chain is Large ribosomal subunit protein uL16, found in Mycobacteroides abscessus (strain ATCC 19977 / DSM 44196 / CCUG 20993 / CIP 104536 / JCM 13569 / NCTC 13031 / TMC 1543 / L948) (Mycobacterium abscessus).